A 428-amino-acid chain; its full sequence is Adenylosuccinate synthetase (428 aa).

Residues 12–18 and 40–42 each bind GTP; these read GDEGKGK and GHT. Catalysis depends on aspartate 13, which acts as the Proton acceptor. Aspartate 13 and glycine 40 together coordinate Mg(2+). Residues 13-16, 38-41, threonine 129, arginine 143, glutamine 224, threonine 239, and arginine 303 contribute to the IMP site; these read DEGK and NAGH. Residue histidine 41 is the Proton donor of the active site. Substrate is bound at residue 299–305; the sequence is VTTGRIR. Residues arginine 305, 331-333, and 410-412 each bind GTP; these read KVD and AYG.

This sequence belongs to the adenylosuccinate synthetase family. In terms of assembly, homodimer. Mg(2+) serves as cofactor.

It localises to the cytoplasm. The catalysed reaction is IMP + L-aspartate + GTP = N(6)-(1,2-dicarboxyethyl)-AMP + GDP + phosphate + 2 H(+). Its pathway is purine metabolism; AMP biosynthesis via de novo pathway; AMP from IMP: step 1/2. Its function is as follows. Plays an important role in the de novo pathway of purine nucleotide biosynthesis. Catalyzes the first committed step in the biosynthesis of AMP from IMP. The sequence is that of Adenylosuccinate synthetase from Francisella tularensis subsp. tularensis (strain FSC 198).